The sequence spans 537 residues: Methionine--tRNA ligase (537 aa).

The 'HIGH' region motif lies at 11-21 (AYPNAAPHIGH). Positions 301–305 (KMSKS) match the 'KMSKS' region motif. ATP is bound at residue lysine 304. Positions 503–537 (PPPTGVFPRYQPSEIEGADPVKSSSKRREHNKRRE) are disordered. Positions 526–537 (SSKRREHNKRRE) are enriched in basic residues.

Belongs to the class-I aminoacyl-tRNA synthetase family. MetG type 2B subfamily. In terms of assembly, monomer.

The protein localises to the cytoplasm. The catalysed reaction is tRNA(Met) + L-methionine + ATP = L-methionyl-tRNA(Met) + AMP + diphosphate. Its function is as follows. Is required not only for elongation of protein synthesis but also for the initiation of all mRNA translation through initiator tRNA(fMet) aminoacylation. The chain is Methionine--tRNA ligase from Mycobacterium leprae (strain TN).